The chain runs to 589 residues: V-type ATP synthase alpha chain (589 aa).

Position 239-246 (239-246) interacts with ATP; the sequence is GPFGAGKT.

It belongs to the ATPase alpha/beta chains family.

It carries out the reaction ATP + H2O + 4 H(+)(in) = ADP + phosphate + 5 H(+)(out). Produces ATP from ADP in the presence of a proton gradient across the membrane. The V-type alpha chain is a catalytic subunit. The polypeptide is V-type ATP synthase alpha chain (Treponema denticola (strain ATCC 35405 / DSM 14222 / CIP 103919 / JCM 8153 / KCTC 15104)).